The primary structure comprises 155 residues: SsrA-binding protein (155 aa).

This sequence belongs to the SmpB family.

Its subcellular location is the cytoplasm. Required for rescue of stalled ribosomes mediated by trans-translation. Binds to transfer-messenger RNA (tmRNA), required for stable association of tmRNA with ribosomes. tmRNA and SmpB together mimic tRNA shape, replacing the anticodon stem-loop with SmpB. tmRNA is encoded by the ssrA gene; the 2 termini fold to resemble tRNA(Ala) and it encodes a 'tag peptide', a short internal open reading frame. During trans-translation Ala-aminoacylated tmRNA acts like a tRNA, entering the A-site of stalled ribosomes, displacing the stalled mRNA. The ribosome then switches to translate the ORF on the tmRNA; the nascent peptide is terminated with the 'tag peptide' encoded by the tmRNA and targeted for degradation. The ribosome is freed to recommence translation, which seems to be the essential function of trans-translation. The chain is SsrA-binding protein from Streptococcus agalactiae serotype Ia (strain ATCC 27591 / A909 / CDC SS700).